A 368-amino-acid chain; its full sequence is F-box only protein 28 (368 aa).

Positions 1–11 are enriched in basic and acidic residues; it reads MAAAAEERMAE. A disordered region spans residues 1-56; it reads MAAAAEERMAEEGGGGQGDGGSSLASGSTQRQPPPPAPQHPQPGSQALPAPALAPD. The span at 12-21 shows a compositional bias: gly residues; the sequence is EGGGGQGDGG. The segment covering 22–31 has biased composition (low complexity); sequence SSLASGSTQR. Residues 32–41 show a composition bias toward pro residues; that stretch reads QPPPPAPQHP. The segment covering 42–56 has biased composition (low complexity); it reads QPGSQALPAPALAPD. Residues 61–109 form the F-box domain; sequence NNTLVALPIVAIENILSFMSYDEISQLRLVCKRMDLVCQRMLNQGFLKV. Phosphoserine is present on residues serine 235 and serine 242. Threonine 270 is subject to Phosphothreonine. Positions 328 to 368 are disordered; the sequence is MESAVGNSSGSGQNEESPRKRKKATEAIDSLRKSKRLRNRK. The span at 333–342 shows a compositional bias: low complexity; that stretch reads GNSSGSGQNE. Serine 344 is modified (phosphoserine).

In terms of assembly, part of a SCF (SKP1-cullin-F-box) protein ligase complex.

Its subcellular location is the chromosome. The protein localises to the centromere. The protein resides in the kinetochore. Functionally, probably recognizes and binds to some phosphorylated proteins and promotes their ubiquitination and degradation. This is F-box only protein 28 (FBXO28) from Homo sapiens (Human).